Here is a 417-residue protein sequence, read N- to C-terminus: Cysteate synthase (417 aa).

N6-(pyridoxal phosphate)lysine is present on lysine 104. Asparagine 131 and threonine 371 together coordinate pyridoxal 5'-phosphate.

It belongs to the threonine synthase family. Cysteate synthase subfamily. As to quaternary structure, homotrimer. It depends on pyridoxal 5'-phosphate as a cofactor.

It catalyses the reaction O-phospho-L-serine + sulfite + H(+) = L-cysteate + phosphate. It participates in cofactor biosynthesis; coenzyme M biosynthesis. Specifically catalyzes the beta-elimination of phosphate from L-phosphoserine and the beta-addition of sulfite to the dehydroalanine intermediate to produce L-cysteate. The sequence is that of Cysteate synthase from Methanococcoides burtonii (strain DSM 6242 / NBRC 107633 / OCM 468 / ACE-M).